Here is a 414-residue protein sequence, read N- to C-terminus: F-box protein At3g47030 (414 aa).

Residues 1–24 (MSGMLGLSAVMGKRPKQQVTARPR) form a disordered region. The F-box domain maps to 28-77 (IEKPEEIPDDLLIDVFSRLSIEDVARCRCLSRFWSSILRRRYFTELFHKM).

In Arabidopsis thaliana (Mouse-ear cress), this protein is F-box protein At3g47030.